Here is a 256-residue protein sequence, read N- to C-terminus: GCN5-related N-acetyltransferase 10, chloroplastic (256 aa).

Residues 1-41 (MGHLPQSLYSAAGPKFPYPGSSGLGVDQRKLTWSRFPVFLR) constitute a chloroplast transit peptide. One can recognise an N-acetyltransferase domain in the interval 106-256 (FMFFQAEVLS…RRVLMSKRFS (151 aa)). Acetyl-CoA contacts are provided by residues 178 to 180 (LAV), 186 to 191 (RKKMAS), 217 to 219 (DAA), and Tyr224. Tyr224 functions as the Proton donor in the catalytic mechanism.

Belongs to the acetyltransferase family. GNAT subfamily. Oligomer. Post-translationally, autoacetylated. In terms of tissue distribution, expressed in green tissues.

It localises to the plastid. It is found in the chloroplast. The enzyme catalyses an N-terminal L-alpha-aminoacyl-[protein] + acetyl-CoA = N-terminal N(alpha)-acetyl-L-alpha-aminoacyl-[protein] + CoA + H(+). The catalysed reaction is L-lysyl-[protein] + acetyl-CoA = N(6)-acetyl-L-lysyl-[protein] + CoA + H(+). It carries out the reaction N-terminal L-methionyl-[protein] + acetyl-CoA = N-terminal N(alpha)-acetyl-L-methionyl-[protein] + CoA + H(+). It catalyses the reaction N-terminal L-seryl-[protein] + acetyl-CoA = N-terminal N(alpha)-acetyl-L-seryl-[protein] + CoA + H(+). The enzyme catalyses N-terminal L-valyl-[protein] + acetyl-CoA = N-terminal N(alpha)-acetyl-L-valyl-[protein] + CoA + H(+). The catalysed reaction is N-terminal L-threonyl-[protein] + acetyl-CoA = N-terminal N(alpha)-acetyl-L-threonyl-[protein] + CoA + H(+). It carries out the reaction N-terminal L-alanyl-[protein] + acetyl-CoA = N-terminal N(alpha)-acetyl-L-alanyl-[protein] + CoA + H(+). It catalyses the reaction N-terminal glycyl-[protein] + acetyl-CoA = N-terminal N(alpha)-acetylglycyl-[protein] + CoA + H(+). Functionally, protein acetyltransferase with dual specificity triggering both N-alpha-acetylation (NTA), with a preference for leucine, methionine, serine, valine and to a lower extent threonine and alanine as substrates (can also use glycine), and epsilon-lysine acetylation (KA) of several plastid proteins. This chain is GCN5-related N-acetyltransferase 10, chloroplastic, found in Arabidopsis thaliana (Mouse-ear cress).